The primary structure comprises 382 residues: SPRY domain-containing protein C285.10c (382 aa).

Residues 21 to 41 (LAILFIFIALAAVIVLLICLL) form a helical membrane-spanning segment. The 206-residue stretch at 79-284 (GFSLLDDMGK…LHVNLGQAGY (206 aa)) folds into the B30.2/SPRY domain. The disordered stretch occupies residues 304–382 (APPPSYSTSQ…MHSMPATDEV (79 aa)). Composition is skewed to polar residues over residues 309 to 334 (YSTSQPTISWDAASESSAGTTTQGDT) and 361 to 372 (FSPSSSNNQAYQ).

The protein localises to the cytoplasm. The protein resides in the membrane. The protein is SPRY domain-containing protein C285.10c of Schizosaccharomyces pombe (strain 972 / ATCC 24843) (Fission yeast).